We begin with the raw amino-acid sequence, 653 residues long: Protein SCARECROW (653 aa).

Disordered stretches follow at residues 1-69 (MAES…RRVS) and 193-265 (PSSS…AVQT). The segment covering 17–31 (PLRTTSSGSSSSNNR) has biased composition (low complexity). Residues 32–41 (GPPPPPPPPL) show a composition bias toward pro residues. Over residues 51-63 (EMSSNPDYNNSSR) the composition is skewed to polar residues. Low complexity predominate over residues 209-230 (QISNNPSPPQQQQQHQQQQQQH). The span at 246-265 (STDAPPQPETVTATVPAVQT) shows a compositional bias: polar residues. In terms of domain architecture, GRAS spans 281–650 (QKQDEEGLHL…LSLLTASAWT (370 aa)). A leucine repeat I (LRI) region spans residues 288–351 (LHLLTLLLQC…LLNSCLGIYA (64 aa)). The LxCxE motif signature appears at 295-299 (LQCAE). The VHIID stretch occupies residues 370 to 435 (FQVFNGISPL…GGPPHVRLTG (66 aa)). The VHIID signature appears at 401-405 (VHIID). A leucine repeat II (LRII) region spans residues 445–477 (ATGKRLSDFADKLGLPFEFCPLAEKVGNLDTER). Residues 486 to 573 (VAVHWLQHSL…QQLLSKEIRN (88 aa)) form a PFYRE region. An SAW region spans residues 576–650 (AVGGPSRSGE…LSLLTASAWT (75 aa)).

This sequence belongs to the GRAS family. In terms of assembly, interacts with SHR, JKD and MGP. Interacts with SIEL. Interacts with RBR1 through its the LxCxE motif. In terms of tissue distribution, expressed in siliques, leaves and roots. Detected in the initial daughter cell before its asymmetric division and remains expressed only in the endodermal cell layer after the division. Expressed in the endodermis or starch sheath of the seedling hypocotyl, in the leaf bundle sheath cells and the root quiescent center.

It localises to the nucleus. Functionally, transcription factor required for quiescent center cells specification and maintenance of surrounding stem cells, and for the asymmetric cell division involved in radial pattern formation in roots. Essential for cell division but not differentiation of the ground tissue. Also required for normal shoot gravitropism. Regulates the radial organization of the shoot axial organs. Binds to the promoter of MGP, NUC, RLK and SCL3. Restricts SHR movment and sequesters it into the nucleus of the endodermis. The polypeptide is Protein SCARECROW (Arabidopsis thaliana (Mouse-ear cress)).